A 79-amino-acid polypeptide reads, in one-letter code: Sec-independent protein translocase protein TatA (79 aa).

The chain crosses the membrane as a helical span at residues 1–21; the sequence is MGGFTSIWHWVIVLLVIVLLF. A disordered region spans residues 48–79; that stretch reads EEEAKNEPKTLDAQVAQTKVHETSEIKSKQES. The span at 66-79 shows a compositional bias: basic and acidic residues; it reads KVHETSEIKSKQES.

The protein belongs to the TatA/E family. The Tat system comprises two distinct complexes: a TatABC complex, containing multiple copies of TatA, TatB and TatC subunits, and a separate TatA complex, containing only TatA subunits. Substrates initially bind to the TatABC complex, which probably triggers association of the separate TatA complex to form the active translocon.

It localises to the cell inner membrane. In terms of biological role, part of the twin-arginine translocation (Tat) system that transports large folded proteins containing a characteristic twin-arginine motif in their signal peptide across membranes. TatA could form the protein-conducting channel of the Tat system. This chain is Sec-independent protein translocase protein TatA, found in Helicobacter pylori (strain Shi470).